A 593-amino-acid polypeptide reads, in one-letter code: Probable tripeptidyl-peptidase SED3 (593 aa).

The N-terminal stretch at 1–18 (MLLRWHSVIPLFLTMTVA) is a signal peptide. The propeptide at 19–198 (LPNTYRTVVE…SLQVIYSSTN (180 aa)) is removed in mature form. Residues Asn-198, Asn-204, Asn-261, and Asn-275 are each glycosylated (N-linked (GlcNAc...) asparagine). The Peptidase S53 domain maps to 206–592 (TITPRCLREL…RILAKIVQHM (387 aa)). Residues Glu-282 and Asp-286 each act as charge relay system in the active site. Asn-295 is a glycosylation site (N-linked (GlcNAc...) asparagine). Residue Ser-496 is the Charge relay system of the active site. Residues Asp-538 and Ile-539 each contribute to the Ca(2+) site. N-linked (GlcNAc...) asparagine glycans are attached at residues Asn-554 and Asn-566. 2 residues coordinate Ca(2+): Gly-570 and Asp-572.

Requires Ca(2+) as cofactor.

The protein resides in the secreted. It is found in the extracellular space. It carries out the reaction Release of an N-terminal tripeptide from a polypeptide.. In terms of biological role, secreted tripeptidyl-peptidase which degrades proteins at acidic pHs and is involved in virulence. The protein is Probable tripeptidyl-peptidase SED3 (SED3) of Trichophyton verrucosum (strain HKI 0517).